Consider the following 427-residue polypeptide: Methylenetetrahydrofolate--tRNA-(uracil-5-)-methyltransferase TrmFO (427 aa).

8-13 (GAGISG) is a binding site for FAD.

It belongs to the MnmG family. TrmFO subfamily. It depends on FAD as a cofactor.

Its subcellular location is the cytoplasm. It catalyses the reaction uridine(54) in tRNA + (6R)-5,10-methylene-5,6,7,8-tetrahydrofolate + NADH + H(+) = 5-methyluridine(54) in tRNA + (6S)-5,6,7,8-tetrahydrofolate + NAD(+). The catalysed reaction is uridine(54) in tRNA + (6R)-5,10-methylene-5,6,7,8-tetrahydrofolate + NADPH + H(+) = 5-methyluridine(54) in tRNA + (6S)-5,6,7,8-tetrahydrofolate + NADP(+). Catalyzes the folate-dependent formation of 5-methyl-uridine at position 54 (M-5-U54) in all tRNAs. This is Methylenetetrahydrofolate--tRNA-(uracil-5-)-methyltransferase TrmFO from Mycoplasmopsis agalactiae (strain NCTC 10123 / CIP 59.7 / PG2) (Mycoplasma agalactiae).